A 1027-amino-acid polypeptide reads, in one-letter code: 2-oxoglutarate dehydrogenase, mitochondrial (1027 aa).

Arginine 315, aspartate 413, asparagine 446, isoleucine 448, and glutamine 674 together coordinate thiamine diphosphate. Mg(2+) contacts are provided by aspartate 413, asparagine 446, and isoleucine 448.

This sequence belongs to the alpha-ketoglutarate dehydrogenase family. In terms of assembly, homodimer. Component of the 2-oxoglutarate dehydrogenase complex. Requires thiamine diphosphate as cofactor. Mg(2+) is required as a cofactor.

It is found in the mitochondrion matrix. The catalysed reaction is N(6)-[(R)-lipoyl]-L-lysyl-[protein] + 2-oxoglutarate + H(+) = N(6)-[(R)-S(8)-succinyldihydrolipoyl]-L-lysyl-[protein] + CO2. Functionally, the 2-oxoglutarate dehydrogenase complex catalyzes the overall conversion of 2-oxoglutarate to succinyl-CoA and CO(2). It contains multiple copies of three enzymatic components: 2-oxoglutarate dehydrogenase (E1), dihydrolipoamide succinyltransferase (E2) and lipoamide dehydrogenase (E3). This Caenorhabditis briggsae protein is 2-oxoglutarate dehydrogenase, mitochondrial (ogdh-1).